The chain runs to 160 residues: Anaerobic nitrite reductase MHB1 (160 aa).

The region spanning 8–157 (GFTEEQEALV…LVNAIKSEMK (150 aa)) is the Globin domain. The Homodimerization motif lies at 41–45 (EIAPS). Residues serine 51, lysine 65, histidine 69, lysine 99, and histidine 104 each contribute to the heme b site. The Homodimerization signature appears at 111-123 (DEHFEVTKFALLE).

The protein belongs to the plant globin family. As to quaternary structure, homodimer. Heme b is required as a cofactor. In terms of tissue distribution, root specific.

It localises to the nucleus matrix. The protein localises to the cytoplasm. The catalysed reaction is Fe(III)-heme b-[protein] + nitric oxide + H2O = Fe(II)-heme b-[protein] + nitrite + 2 H(+). Functionally, phytoglobin that reduces nitrite to nitric oxide (NO) under anoxic conditions (e.g. during flooding or in waterlogged soil) and upon root nodulation. Required for general plant development and during nodulation, especially for the onset of symbiosis. Monitors nitric oxide (NO) levels during early phase of the nitrogen-fixing symbiosis and buffers oxygen in functioning nodules. May not function as an oxygen storage or transport protein. Has an unusually high affinity for O(2) through a hexacoordinate heme iron because of a very low dissociation constant. This is Anaerobic nitrite reductase MHB1 from Medicago sativa (Alfalfa).